The primary structure comprises 420 residues: MSRQMWLDTSALLEAISEYVVRCNGDTFSGLTTGDFNALSNMFTQLSVSSAGYVSDPRVPLQTMSNMFVSFITSTDRCGYMLRKTWFNSDTKPTVSDDFITTYIRPRLQVPMSDTVRQLNNLSLQPSAKPKLYERQNAIMKGLDIPYSEPIEPCKLFRSVAGQTGNIPMMGILATPPAQQQPFFVAERRRILFGIRSNAAIPAGAYQFVVPAWASVLSVTGAYVYFTNSFFGTIIAGVTATATAADAATTFTVPTDANNLPVQTDSRLSFSLGGGNINLELGVAKTGFCVAIEGEFTILANRSQAYYTLNSITQTPTSIDDFDVSDFLTTFLSQLRACGQYEIFSDAMDQLTNSLITNYMDPPAIPAGLAFTSPWFRFSERARTILALQNVDLNIRKLIVRHLWVITSLIAVFGRYYRPN.

Belongs to the phytoreovirus outer capsid protein P8 family. As to quaternary structure, homotrimer. Homomultimer. Interacts with host peroxisomal glycolate oxidase (GOX). This interaction mediates its relocation to virus factories peripheral to host peroxisomes.

It localises to the virion. Its subcellular location is the host cytoplasm. Capsid protein which self-assembles to form the outer icosahedral capsid with a T=13 symmetry, about 70 nm in diameter and consisting of 780 molecules capsid proteins. The sequence is that of Outer capsid protein P8 from Alopecurus aequalis (Barnyard grass).